The sequence spans 306 residues: Recombination-associated protein RdgC (306 aa).

This sequence belongs to the RdgC family.

It is found in the cytoplasm. It localises to the nucleoid. In terms of biological role, may be involved in recombination. This chain is Recombination-associated protein RdgC, found in Burkholderia ambifaria (strain MC40-6).